A 96-amino-acid polypeptide reads, in one-letter code: Glycine-rich protein DC7.1 (96 aa).

Positions 1–25 (MGSKIFLLLGLSIAFALLISSEVAA) are cleaved as a signal peptide. The tract at residues 29–66 (SETTTEGASLDGGHHGGGGGGHYSGGGGHGGSHHGGGG) is disordered. A run of 2 repeats spans residues 42–50 (HHGGGGGGH) and 61–67 (HHGGGGH). A 2 approximate repeats of H-H-G(4,6)-H region spans residues 42–67 (HHGGGGGGHYSGGGGHGGSHHGGGGH). Residues 43–66 (HGGGGGGHYSGGGGHGGSHHGGGG) are compositionally biased toward gly residues.

Belongs to the GRP family.

Its function is as follows. May be connected with the initiation of embryogenesis or with the metabolic changes produced by the removal of auxins. The sequence is that of Glycine-rich protein DC7.1 from Daucus carota (Wild carrot).